The primary structure comprises 5386 residues: Nonribosomal peptide synthetase 2 (5386 aa).

The interval 45–435 (HDANAIDFLE…QGLLECLGRV (391 aa)) is adenylation 1. The Carrier 1 domain occupies 544 to 617 (SPKDPIGHSV…DLIEVCRESK (74 aa)). Position 578 is an O-(pantetheine 4'-phosphoryl)serine (serine 578). The tract at residues 652–1059 (LPCTPLQEAM…VDADRHVSAI (408 aa)) is condensation 1. The interval 1089–1482 (EKWAATDPHR…GRTDDQVKIR (394 aa)) is adenylation 2. The Carrier 2 domain occupies 1611 to 1688 (ELLSQWERDV…SLASLKKLQS (78 aa)). Position 1648 is an O-(pantetheine 4'-phosphoryl)serine (serine 1648). Positions 1731–2141 (ILPCTPLQEA…ALSADTDMFP (411 aa)) are condensation 2. The adenylation 3 stretch occupies residues 2166–2551 (FERTALLHPD…GRLDDQVKIR (386 aa)). The Carrier 3 domain maps to 2652 to 2725 (SKTESEVRNI…DLAEHLDQIS (74 aa)). Serine 2686 carries the O-(pantetheine 4'-phosphoryl)serine modification. Residues 2763-3174 (RPCTPLQNGM…HSQIPLAKTD (412 aa)) form a condensation 3 region. Positions 3202-3603 (EKTAQEHPQR…GRADDQVKLR (402 aa)) are adenylation 4. A Carrier 4 domain is found at 3728–3805 (EQWSKQEEKL…RLAKSLAANS (78 aa)). Serine 3765 is modified (O-(pantetheine 4'-phosphoryl)serine). The segment at 3846-4250 (LAPCTPLQQG…LDQAINDPSA (405 aa)) is condensation 4. Positions 4281–4357 (FEWSDNAIAI…KMAQNMSMKN (77 aa)) constitute a Carrier 5 domain. At serine 4318 the chain carries O-(pantetheine 4'-phosphoryl)serine. The segment at 4391–4802 (EEILPLTPLQ…ERAEAPVIDM (412 aa)) is condensation 5. Positions 4821-4842 (HTGSGHVESGEDDGQDTPSTET) are disordered. Residues 4840-4913 (TETTNRIRKI…KMAKLADARA (74 aa)) enclose the Carrier 6 domain. Position 4874 is an O-(pantetheine 4'-phosphoryl)serine (serine 4874). Positions 4952–5257 (QMLPVTAGQL…VQAHLRHLND (306 aa)) are condensation 6.

This sequence belongs to the NRP synthetase family.

It participates in siderophore biosynthesis. Its function is as follows. Nonribosomal peptide synthetase; part of the gene cluster that mediates the biosynthesis of hydroxamate-containing siderophores that play a critical role in virulence. Cochliobolus heterostrophus produces extracellular coprogen-type siderophores including coprogen, neocoprogen I and neocoprogen II, as well as the intracellular siderophore ferricrocin. The role of extracellular siderophores is to supply iron to the fungus during plant infection, and the intracellular ferricrocin is required for intracellular iron distribution and storage with a crucial role in ascus and ascospore development. SIDA2 catalyzes the conversion of L-ornithine to N(5)-hydroxyornithine, the first step in the biosynthesis of all hydroxamate-containing siderophores. The assembly of extracellular coprogen-type siderophores is then performed by the nonribosomal peptide synthetase (NRPS) NPS6 whereas the intracellular siderophore ferricrocin is assembled by NPS2. The polypeptide is Nonribosomal peptide synthetase 2 (Cochliobolus heterostrophus (strain C4 / ATCC 48331 / race T) (Southern corn leaf blight fungus)).